Here is a 465-residue protein sequence, read N- to C-terminus: ATP-dependent protease ATPase subunit HslU (465 aa).

ATP contacts are provided by residues Val-18, 60–65 (GVGKTE), Asp-277, Glu-342, and Arg-414.

This sequence belongs to the ClpX chaperone family. HslU subfamily. In terms of assembly, a double ring-shaped homohexamer of HslV is capped on each side by a ring-shaped HslU homohexamer. The assembly of the HslU/HslV complex is dependent on binding of ATP.

The protein resides in the cytoplasm. In terms of biological role, ATPase subunit of a proteasome-like degradation complex; this subunit has chaperone activity. The binding of ATP and its subsequent hydrolysis by HslU are essential for unfolding of protein substrates subsequently hydrolyzed by HslV. HslU recognizes the N-terminal part of its protein substrates and unfolds these before they are guided to HslV for hydrolysis. In Caldicellulosiruptor saccharolyticus (strain ATCC 43494 / DSM 8903 / Tp8T 6331), this protein is ATP-dependent protease ATPase subunit HslU.